Here is a 197-residue protein sequence, read N- to C-terminus: Adenylyl-sulfate kinase (197 aa).

ATP is bound at residue 33–40 (GLSGSGKS). Residue S107 is the Phosphoserine intermediate of the active site.

The protein belongs to the APS kinase family.

It carries out the reaction adenosine 5'-phosphosulfate + ATP = 3'-phosphoadenylyl sulfate + ADP + H(+). Its pathway is sulfur metabolism; hydrogen sulfide biosynthesis; sulfite from sulfate: step 2/3. Its function is as follows. Catalyzes the synthesis of activated sulfate. The chain is Adenylyl-sulfate kinase from Bacillus velezensis (strain DSM 23117 / BGSC 10A6 / LMG 26770 / FZB42) (Bacillus amyloliquefaciens subsp. plantarum).